Reading from the N-terminus, the 544-residue chain is CTP synthase (544 aa).

Residues 1 to 267 (MAKFVFVTGG…CRQVLDVLSL (267 aa)) form an amidoligase domain region. S13 serves as a coordination point for CTP. S13 provides a ligand contact to UTP. Residues 14-19 (SIGKGI) and D71 each bind ATP. Mg(2+)-binding residues include D71 and E141. Residues 148 to 150 (DIE), 188 to 193 (KTKPTQ), and K224 contribute to the CTP site. Residues 188–193 (KTKPTQ) and K224 contribute to the UTP site. The 243-residue stretch at 292–534 (KVALVGKYVQ…IQAASQRLPQ (243 aa)) folds into the Glutamine amidotransferase type-1 domain. Residue G354 coordinates L-glutamine. The active-site Nucleophile; for glutamine hydrolysis is the C381. L-glutamine is bound by residues 382–385 (LGMQ), E405, and R462. Catalysis depends on residues H507 and E509.

Belongs to the CTP synthase family. In terms of assembly, homotetramer.

It carries out the reaction UTP + L-glutamine + ATP + H2O = CTP + L-glutamate + ADP + phosphate + 2 H(+). The catalysed reaction is L-glutamine + H2O = L-glutamate + NH4(+). The enzyme catalyses UTP + NH4(+) + ATP = CTP + ADP + phosphate + 2 H(+). It functions in the pathway pyrimidine metabolism; CTP biosynthesis via de novo pathway; CTP from UDP: step 2/2. Its activity is regulated as follows. Allosterically activated by GTP, when glutamine is the substrate; GTP has no effect on the reaction when ammonia is the substrate. The allosteric effector GTP functions by stabilizing the protein conformation that binds the tetrahedral intermediate(s) formed during glutamine hydrolysis. Inhibited by the product CTP, via allosteric rather than competitive inhibition. Functionally, catalyzes the ATP-dependent amination of UTP to CTP with either L-glutamine or ammonia as the source of nitrogen. Regulates intracellular CTP levels through interactions with the four ribonucleotide triphosphates. The chain is CTP synthase from Synechococcus sp. (strain RCC307).